The following is a 446-amino-acid chain: tRNA modification GTPase MnmE (446 aa).

(6S)-5-formyl-5,6,7,8-tetrahydrofolate contacts are provided by R24, E81, and K120. In terms of domain architecture, TrmE-type G spans G216–L368. N226 contacts K(+). GTP is bound by residues N226–S231, T245–T251, and D270–G273. S230 serves as a coordination point for Mg(2+). Residues T245, V247, and T250 each contribute to the K(+) site. Residue T251 participates in Mg(2+) binding. K446 provides a ligand contact to (6S)-5-formyl-5,6,7,8-tetrahydrofolate.

Belongs to the TRAFAC class TrmE-Era-EngA-EngB-Septin-like GTPase superfamily. TrmE GTPase family. Homodimer. Heterotetramer of two MnmE and two MnmG subunits. K(+) serves as cofactor.

The protein localises to the cytoplasm. In terms of biological role, exhibits a very high intrinsic GTPase hydrolysis rate. Involved in the addition of a carboxymethylaminomethyl (cmnm) group at the wobble position (U34) of certain tRNAs, forming tRNA-cmnm(5)s(2)U34. This chain is tRNA modification GTPase MnmE, found in Xanthomonas oryzae pv. oryzae (strain PXO99A).